A 288-amino-acid polypeptide reads, in one-letter code: 4-hydroxy-tetrahydrodipicolinate synthase (288 aa).

Threonine 42 contacts pyruvate. Catalysis depends on tyrosine 129, which acts as the Proton donor/acceptor. The active-site Schiff-base intermediate with substrate is the lysine 157. Pyruvate is bound at residue isoleucine 198.

This sequence belongs to the DapA family. As to quaternary structure, homotetramer; dimer of dimers.

It is found in the cytoplasm. The enzyme catalyses L-aspartate 4-semialdehyde + pyruvate = (2S,4S)-4-hydroxy-2,3,4,5-tetrahydrodipicolinate + H2O + H(+). Its pathway is amino-acid biosynthesis; L-lysine biosynthesis via DAP pathway; (S)-tetrahydrodipicolinate from L-aspartate: step 3/4. Its function is as follows. Catalyzes the condensation of (S)-aspartate-beta-semialdehyde [(S)-ASA] and pyruvate to 4-hydroxy-tetrahydrodipicolinate (HTPA). The sequence is that of 4-hydroxy-tetrahydrodipicolinate synthase from Chlamydia abortus (strain DSM 27085 / S26/3) (Chlamydophila abortus).